The primary structure comprises 374 residues: Guanine nucleotide-binding protein subunit alpha-15 (374 aa).

The G-alpha domain occupies 41–374; that stretch reads EELKLLLLGP…ARYLDEINLL (334 aa). The tract at residues 44–57 is G1 motif; the sequence is KLLLLGPGESGKST. GTP contacts are provided by residues 49 to 56, 183 to 189, 208 to 212, 277 to 280, and A346; these read GPGESGKS, LRSRMPT, DVGGQ, and NKTD. Mg(2+) is bound by residues S56 and T189. A G2 motif region spans residues 181-189; the sequence is DVLRSRMPT. The tract at residues 204 to 213 is G3 motif; the sequence is LRIVDVGGQR. The interval 273-280 is G4 motif; sequence ILFLNKTD. The G5 motif stretch occupies residues 344–349; it reads TCATDT.

The protein belongs to the G-alpha family. G(q) subfamily. In terms of assembly, g proteins are composed of 3 units; alpha, beta and gamma. The alpha chain contains the guanine nucleotide binding site. In terms of tissue distribution, expressed primarily in hematopoietic cells. Coexpressed with EDG6 at the same relative levels in all tissues examined, with the highest levels in adult spleen and lung.

Its function is as follows. Guanine nucleotide-binding proteins (G proteins) are involved as modulators or transducers in various transmembrane signaling systems. This Mus musculus (Mouse) protein is Guanine nucleotide-binding protein subunit alpha-15 (Gna15).